The sequence spans 219 residues: UPF0173 metal-dependent hydrolase Mhun_1705 (219 aa).

It belongs to the UPF0173 family.

The protein is UPF0173 metal-dependent hydrolase Mhun_1705 of Methanospirillum hungatei JF-1 (strain ATCC 27890 / DSM 864 / NBRC 100397 / JF-1).